The primary structure comprises 565 residues: NAD-dependent malic enzyme (565 aa).

Catalysis depends on tyrosine 104, which acts as the Proton donor. Arginine 157 lines the NAD(+) pocket. The Proton acceptor role is filled by lysine 175. 3 residues coordinate a divalent metal cation: glutamate 246, aspartate 247, and aspartate 270. 2 residues coordinate NAD(+): aspartate 270 and asparagine 418.

This sequence belongs to the malic enzymes family. In terms of assembly, homotetramer. Requires Mg(2+) as cofactor. The cofactor is Mn(2+).

The enzyme catalyses (S)-malate + NAD(+) = pyruvate + CO2 + NADH. It carries out the reaction oxaloacetate + H(+) = pyruvate + CO2. The polypeptide is NAD-dependent malic enzyme (Proteus mirabilis (strain HI4320)).